The chain runs to 283 residues: Pantothenate synthetase (283 aa).

30–37 is a binding site for ATP; the sequence is MGNLHSGH. The active-site Proton donor is H37. Residue Q61 participates in (R)-pantoate binding. Q61 contacts beta-alanine. 149-152 serves as a coordination point for ATP; it reads GEKD. A (R)-pantoate-binding site is contributed by Q155. Residues V178 and 186–189 contribute to the ATP site; that span reads LSSR.

Belongs to the pantothenate synthetase family. In terms of assembly, homodimer.

It localises to the cytoplasm. It catalyses the reaction (R)-pantoate + beta-alanine + ATP = (R)-pantothenate + AMP + diphosphate + H(+). It functions in the pathway cofactor biosynthesis; (R)-pantothenate biosynthesis; (R)-pantothenate from (R)-pantoate and beta-alanine: step 1/1. In terms of biological role, catalyzes the condensation of pantoate with beta-alanine in an ATP-dependent reaction via a pantoyl-adenylate intermediate. The protein is Pantothenate synthetase of Pseudomonas savastanoi pv. phaseolicola (strain 1448A / Race 6) (Pseudomonas syringae pv. phaseolicola (strain 1448A / Race 6)).